A 155-amino-acid polypeptide reads, in one-letter code: MAKGEGNLLAQNKKASHDYHIVETIEAGIVLTGTEIKSVRAARIQLKDGFAQIKNGEAWLMNVHIAPFEQGNIWNADPERTRKLLLKKREINHLANELKGTGMTLIPLKVYLKDGFAKILLGLAKGKHDYDKRESIKRREQDRDIKRVMKSINAR.

Belongs to the SmpB family.

Its subcellular location is the cytoplasm. In terms of biological role, required for rescue of stalled ribosomes mediated by trans-translation. Binds to transfer-messenger RNA (tmRNA), required for stable association of tmRNA with ribosomes. tmRNA and SmpB together mimic tRNA shape, replacing the anticodon stem-loop with SmpB. tmRNA is encoded by the ssrA gene; the 2 termini fold to resemble tRNA(Ala) and it encodes a 'tag peptide', a short internal open reading frame. During trans-translation Ala-aminoacylated tmRNA acts like a tRNA, entering the A-site of stalled ribosomes, displacing the stalled mRNA. The ribosome then switches to translate the ORF on the tmRNA; the nascent peptide is terminated with the 'tag peptide' encoded by the tmRNA and targeted for degradation. The ribosome is freed to recommence translation, which seems to be the essential function of trans-translation. In Streptococcus uberis (strain ATCC BAA-854 / 0140J), this protein is SsrA-binding protein.